The sequence spans 538 residues: Bifunctional purine biosynthesis protein PurH (538 aa).

The MGS-like domain maps to 8–158 (IPAPDKVQVK…KNHAYVTTLT (151 aa)).

This sequence belongs to the PurH family.

It catalyses the reaction (6R)-10-formyltetrahydrofolate + 5-amino-1-(5-phospho-beta-D-ribosyl)imidazole-4-carboxamide = 5-formamido-1-(5-phospho-D-ribosyl)imidazole-4-carboxamide + (6S)-5,6,7,8-tetrahydrofolate. It carries out the reaction IMP + H2O = 5-formamido-1-(5-phospho-D-ribosyl)imidazole-4-carboxamide. It participates in purine metabolism; IMP biosynthesis via de novo pathway; 5-formamido-1-(5-phospho-D-ribosyl)imidazole-4-carboxamide from 5-amino-1-(5-phospho-D-ribosyl)imidazole-4-carboxamide (10-formyl THF route): step 1/1. Its pathway is purine metabolism; IMP biosynthesis via de novo pathway; IMP from 5-formamido-1-(5-phospho-D-ribosyl)imidazole-4-carboxamide: step 1/1. The chain is Bifunctional purine biosynthesis protein PurH from Rhizobium rhizogenes (strain K84 / ATCC BAA-868) (Agrobacterium radiobacter).